Consider the following 208-residue polypeptide: Riboflavin synthase (208 aa).

Lumazine-binding repeat units follow at residues 1–97 and 98–195; these read MFTG…MGGH and FVQG…EKLV. Residues 4-6, 48-50, 62-67, 101-103, lysine 137, 146-148, and 160-165 each bind 2,4-dihydroxypteridine; these read GLV, CLT, GIAPES, GHV, SLT, and MMISYT.

In terms of assembly, homotrimer.

The catalysed reaction is 2 6,7-dimethyl-8-(1-D-ribityl)lumazine + H(+) = 5-amino-6-(D-ribitylamino)uracil + riboflavin. The protein operates within cofactor biosynthesis; riboflavin biosynthesis; riboflavin from 2-hydroxy-3-oxobutyl phosphate and 5-amino-6-(D-ribitylamino)uracil: step 2/2. Catalyzes the dismutation of two molecules of 6,7-dimethyl-8-ribityllumazine, resulting in the formation of riboflavin and 5-amino-6-(D-ribitylamino)uracil. This is Riboflavin synthase (rib5) from Schizosaccharomyces pombe (strain 972 / ATCC 24843) (Fission yeast).